The primary structure comprises 839 residues: Protein translocase subunit SecA (839 aa).

ATP-binding positions include Gln-85, 103 to 107 (GEGKT), and Asp-493. Positions 780 to 790 (QIHEQERERAS) are enriched in basic and acidic residues. Residues 780–839 (QIHEQERERASQRATTAAPQNIQSQQSANTDDLPKVERNEACPCGSGKKFKNCHGRKSFS) are disordered. Polar residues predominate over residues 791 to 809 (QRATTAAPQNIQSQQSANT). The Zn(2+) site is built by Cys-821, Cys-823, Cys-832, and His-833. The span at 827 to 839 (KKFKNCHGRKSFS) shows a compositional bias: basic residues.

The protein belongs to the SecA family. In terms of assembly, monomer and homodimer. Part of the essential Sec protein translocation apparatus which comprises SecA, SecYEG and auxiliary proteins SecDF. Other proteins may also be involved. Zn(2+) serves as cofactor.

It localises to the cell membrane. The protein resides in the cytoplasm. It carries out the reaction ATP + H2O + cellular proteinSide 1 = ADP + phosphate + cellular proteinSide 2.. In terms of biological role, part of the Sec protein translocase complex. Interacts with the SecYEG preprotein conducting channel. Has a central role in coupling the hydrolysis of ATP to the transfer of proteins into and across the cell membrane, serving as an ATP-driven molecular motor driving the stepwise translocation of polypeptide chains across the membrane. This is Protein translocase subunit SecA from Streptococcus pyogenes serotype M6 (strain ATCC BAA-946 / MGAS10394).